The chain runs to 442 residues: 3-phosphoshikimate 1-carboxyvinyltransferase (442 aa).

Lys-25, Ser-26, and Arg-30 together coordinate 3-phosphoshikimate. Lys-25 contacts phosphoenolpyruvate. Phosphoenolpyruvate is bound by residues Gly-96 and Arg-124. Residues Ser-171, Ser-172, Gln-173, Ser-203, Asp-325, and Lys-352 each coordinate 3-phosphoshikimate. Gln-173 is a phosphoenolpyruvate binding site. Catalysis depends on Asp-325, which acts as the Proton acceptor. The phosphoenolpyruvate site is built by Arg-356, Arg-400, and Lys-425.

It belongs to the EPSP synthase family. In terms of assembly, monomer.

It is found in the cytoplasm. The enzyme catalyses 3-phosphoshikimate + phosphoenolpyruvate = 5-O-(1-carboxyvinyl)-3-phosphoshikimate + phosphate. Its pathway is metabolic intermediate biosynthesis; chorismate biosynthesis; chorismate from D-erythrose 4-phosphate and phosphoenolpyruvate: step 6/7. Catalyzes the transfer of the enolpyruvyl moiety of phosphoenolpyruvate (PEP) to the 5-hydroxyl of shikimate-3-phosphate (S3P) to produce enolpyruvyl shikimate-3-phosphate and inorganic phosphate. The polypeptide is 3-phosphoshikimate 1-carboxyvinyltransferase (Bordetella bronchiseptica (strain ATCC BAA-588 / NCTC 13252 / RB50) (Alcaligenes bronchisepticus)).